A 316-amino-acid chain; its full sequence is NAC domain-containing protein 2 (316 aa).

Positions 17–170 constitute an NAC domain; that stretch reads LPPGFRFHPT…DWVLCRLYNK (154 aa). A DNA-binding region spans residues 114–176; it reads LGIKKALVFY…LYNKKNEWEK (63 aa). Positions 185–210 are disordered; the sequence is EEASDMVTSQSHSHTHSWGETRTPES. A compositionally biased stretch (polar residues) spans 190–200; it reads MVTSQSHSHTH.

In terms of assembly, forms homodimer. Interacts with NAC071. In terms of tissue distribution, expressed in roots and stamens.

It localises to the nucleus. In terms of biological role, transcription factor that possesses transactivation activity. Transcription activator involved in response to abiotic stresses. Plays a positive role during dehydration and salt stress. Binds specifically to the 5'-CATGTG-3' motif found in promoters of stress-responsive genes. This is NAC domain-containing protein 2 from Oryza sativa subsp. japonica (Rice).